We begin with the raw amino-acid sequence, 804 residues long: Phenylalanine--tRNA ligase beta subunit (804 aa).

The region spanning D40 to I155 is the tRNA-binding domain. One can recognise a B5 domain in the interval Q409–A484. 4 residues coordinate Mg(2+): D462, D468, E471, and E472. The region spanning P710–R803 is the FDX-ACB domain.

This sequence belongs to the phenylalanyl-tRNA synthetase beta subunit family. Type 1 subfamily. In terms of assembly, tetramer of two alpha and two beta subunits. Requires Mg(2+) as cofactor.

Its subcellular location is the cytoplasm. The enzyme catalyses tRNA(Phe) + L-phenylalanine + ATP = L-phenylalanyl-tRNA(Phe) + AMP + diphosphate + H(+). This is Phenylalanine--tRNA ligase beta subunit from Geobacillus kaustophilus (strain HTA426).